Consider the following 228-residue polypeptide: MPKLILCRHGQSEWNAKNLFTGWADVKLSKQGIEEAQSAGKKIYDNQIEIDIAFTSLLTRALETTQYILAGSDQQWIPVYKSWRLNERHYGGLQGLNKDDARKKWGEDQVHQWRRSYDVRPPRESEEQREAYLKNRRYQHIDHRMMPYCESLKDTLERVVPFWTDHISQHLLDDKTVLVSAHGNSIRALIKYLEGLSEEDIVGYEIKTGAPLVYELTDDLVVKDKYYL.

Substrate-binding positions include 8–15 (RHGQSEWN), 21–22 (TG), Arg60, 87–90 (ERHY), Lys98, 114–115 (RR), and 183–184 (GN). His9 functions as the Tele-phosphohistidine intermediate in the catalytic mechanism. Glu87 acts as the Proton donor/acceptor in catalysis.

It belongs to the phosphoglycerate mutase family. BPG-dependent PGAM subfamily.

The enzyme catalyses (2R)-2-phosphoglycerate = (2R)-3-phosphoglycerate. The protein operates within carbohydrate degradation; glycolysis; pyruvate from D-glyceraldehyde 3-phosphate: step 3/5. In terms of biological role, catalyzes the interconversion of 2-phosphoglycerate and 3-phosphoglycerate. This is 2,3-bisphosphoglycerate-dependent phosphoglycerate mutase from Staphylococcus epidermidis (strain ATCC 12228 / FDA PCI 1200).